The primary structure comprises 230 residues: 7-cyano-7-deazaguanine synthase (230 aa).

9–19 (ISGGLDSTTCL) lines the ATP pocket. 4 residues coordinate Zn(2+): C192, C202, C205, and C208.

It belongs to the QueC family. It depends on Zn(2+) as a cofactor.

It carries out the reaction 7-carboxy-7-deazaguanine + NH4(+) + ATP = 7-cyano-7-deazaguanine + ADP + phosphate + H2O + H(+). It participates in purine metabolism; 7-cyano-7-deazaguanine biosynthesis. Its function is as follows. Catalyzes the ATP-dependent conversion of 7-carboxy-7-deazaguanine (CDG) to 7-cyano-7-deazaguanine (preQ(0)). The chain is 7-cyano-7-deazaguanine synthase from Myxococcus xanthus (strain DK1622).